The chain runs to 142 residues: MSTPVSEKINNKMRFPFEGIYHTIFPTKFYTRVYCQHNEYQNSISAIAELRVPIGSTIAKYDSDHGMIRADKVIVEKITTVDNDIVSDDFYCGKFNKGAVLNYKDSFKTKHNYSSSGIHGSLYKEKAHYSYDGRLPSIGSSW.

This is an uncharacterized protein from Acanthamoeba polyphaga (Amoeba).